Reading from the N-terminus, the 210-residue chain is MARFGAVIHRVFLPLLLLLVVLGACHVTPAAAAAGARLSALAKALVVEASPRAGQVLHAGEDAITVTWSLNATAAAAAAGADAGYKAVKVTLCYAPASQVGRGWRKAHDDLSKDKACQFKIAQQPYDGAGKFEYTVARDVPTASYYVRAYALDASGARVAYGETAPSASFAVAGITGVTASIEVAAGVLSAFSVAALAVFLVLENKKKNK.

The signal sequence occupies residues 1-23; it reads MARFGAVIHRVFLPLLLLLVVLG. A helical membrane pass occupies residues 182-202; sequence IEVAAGVLSAFSVAALAVFLV.

This sequence belongs to the NAR2 family.

It is found in the cell membrane. Its function is as follows. Involved in nitrate transport. This Oryza sativa subsp. japonica (Rice) protein is Probable high-affinity nitrate transporter-activating protein 2.2 (NAR2.2).